Consider the following 275-residue polypeptide: Diaminopimelate epimerase (275 aa).

Asn-12, Gln-45, and Asn-65 together coordinate substrate. The active-site Proton donor is the Cys-74. Substrate contacts are provided by residues Gly-75–Asn-76, Asn-158, Asn-191, and Glu-209–Arg-210. The active-site Proton acceptor is Cys-218. Gly-219 to Thr-220 serves as a coordination point for substrate.

The protein belongs to the diaminopimelate epimerase family. As to quaternary structure, homodimer.

The protein resides in the cytoplasm. It carries out the reaction (2S,6S)-2,6-diaminopimelate = meso-2,6-diaminopimelate. It functions in the pathway amino-acid biosynthesis; L-lysine biosynthesis via DAP pathway; DL-2,6-diaminopimelate from LL-2,6-diaminopimelate: step 1/1. Its function is as follows. Catalyzes the stereoinversion of LL-2,6-diaminopimelate (L,L-DAP) to meso-diaminopimelate (meso-DAP), a precursor of L-lysine and an essential component of the bacterial peptidoglycan. This chain is Diaminopimelate epimerase, found in Shewanella oneidensis (strain ATCC 700550 / JCM 31522 / CIP 106686 / LMG 19005 / NCIMB 14063 / MR-1).